The following is a 405-amino-acid chain: Imidazolonepropionase (405 aa).

The Fe(3+) site is built by H73 and H75. H73 and H75 together coordinate Zn(2+). R82, Y145, and H178 together coordinate 4-imidazolone-5-propanoate. Y145 contacts N-formimidoyl-L-glutamate. Residue H243 participates in Fe(3+) binding. A Zn(2+)-binding site is contributed by H243. Q246 is a 4-imidazolone-5-propanoate binding site. D318 is a Fe(3+) binding site. D318 lines the Zn(2+) pocket. The N-formimidoyl-L-glutamate site is built by N320 and G322. T323 contacts 4-imidazolone-5-propanoate.

It belongs to the metallo-dependent hydrolases superfamily. HutI family. It depends on Zn(2+) as a cofactor. Fe(3+) is required as a cofactor.

The protein resides in the cytoplasm. The catalysed reaction is 4-imidazolone-5-propanoate + H2O = N-formimidoyl-L-glutamate. It functions in the pathway amino-acid degradation; L-histidine degradation into L-glutamate; N-formimidoyl-L-glutamate from L-histidine: step 3/3. Its function is as follows. Catalyzes the hydrolytic cleavage of the carbon-nitrogen bond in imidazolone-5-propanoate to yield N-formimidoyl-L-glutamate. It is the third step in the universal histidine degradation pathway. This Brucella suis (strain ATCC 23445 / NCTC 10510) protein is Imidazolonepropionase.